Reading from the N-terminus, the 167-residue chain is 3-dehydroquinate dehydratase (167 aa).

Tyr22 acts as the Proton acceptor in catalysis. Positions 76, 82, and 89 each coordinate substrate. His102 acts as the Proton donor in catalysis. Residues 103-104 (LT) and Arg113 each bind substrate.

Belongs to the type-II 3-dehydroquinase family. In terms of assembly, homododecamer.

The catalysed reaction is 3-dehydroquinate = 3-dehydroshikimate + H2O. Its pathway is metabolic intermediate biosynthesis; chorismate biosynthesis; chorismate from D-erythrose 4-phosphate and phosphoenolpyruvate: step 3/7. In terms of biological role, catalyzes a trans-dehydration via an enolate intermediate. In Helicobacter pylori (strain P12), this protein is 3-dehydroquinate dehydratase.